A 326-amino-acid chain; its full sequence is tRNA-dihydrouridine(16) synthase (326 aa).

FMN contacts are provided by residues 8–10 (PME) and glutamine 69. Cysteine 99 (proton donor) is an active-site residue. Residues lysine 140, 200–202 (NGE), and 224–225 (GR) each bind FMN.

This sequence belongs to the Dus family. DusC subfamily. FMN is required as a cofactor.

The enzyme catalyses 5,6-dihydrouridine(16) in tRNA + NADP(+) = uridine(16) in tRNA + NADPH + H(+). It catalyses the reaction 5,6-dihydrouridine(16) in tRNA + NAD(+) = uridine(16) in tRNA + NADH + H(+). Functionally, catalyzes the synthesis of 5,6-dihydrouridine (D), a modified base found in the D-loop of most tRNAs, via the reduction of the C5-C6 double bond in target uridines. Specifically modifies U16 in tRNAs. In Ralstonia nicotianae (strain ATCC BAA-1114 / GMI1000) (Ralstonia solanacearum), this protein is tRNA-dihydrouridine(16) synthase.